A 300-amino-acid chain; its full sequence is Alpha-tubulin N-acetyltransferase 1 (300 aa).

An N-acetyltransferase domain is found at 1–190 (MEFPFDVDAL…NNFVIFEGFF (190 aa)). Residue Lys56 is modified to N6-acetyllysine; by autocatalysis. 124 to 137 (FYIHESLQRHGHGR) contacts acetyl-CoA. An N6-acetyllysine; by autocatalysis modification is found at Lys146. Residue 160-169 (SQKLLKFLNK) participates in acetyl-CoA binding. An N6-acetyllysine; by autocatalysis mark is found at Lys210 and Lys221. Disordered regions lie at residues 229–263 (PLNRAPRRATPPAHPPPRSSSLGNSPERGPLRPFV) and 280–300 (TARLLLATDPGGSPAQRRRTR). 2 positions are modified to phosphoserine: Ser249 and Ser253. Arg282 carries the asymmetric dimethylarginine modification. Ser292 is modified (phosphoserine). Residue Arg300 is modified to Omega-N-methylarginine.

Belongs to the acetyltransferase ATAT1 family. Component of the BBSome complex. Interacts with AP2 alpha-adaptins, including AP2A2, but not with AP1 gamma-adaptin (AP1G1/AP1G2); this interaction is required for efficient alpha-tubulin acetylation, hence clathrin-coated pits are sites of microtubule acetylation. Autoacetylation strongly increases tubulin acetylation.

It is found in the cytoplasm. The protein resides in the membrane. The protein localises to the clathrin-coated pit. It localises to the cell junction. Its subcellular location is the focal adhesion. It is found in the cell projection. The protein resides in the axon. The protein localises to the cytoskeleton. It localises to the spindle. It carries out the reaction L-lysyl-[alpha-tubulin] + acetyl-CoA = N(6)-acetyl-L-lysyl-[alpha-tubulin] + CoA + H(+). Its function is as follows. Specifically acetylates 'Lys-40' in alpha-tubulin on the lumenal side of microtubules. Promotes microtubule destabilization and accelerates microtubule dynamics; this activity may be independent of acetylation activity. Acetylates alpha-tubulin with a slow enzymatic rate, due to a catalytic site that is not optimized for acetyl transfer. Enters the microtubule through each end and diffuses quickly throughout the lumen of microtubules. Acetylates only long/old microtubules because of its slow acetylation rate since it does not have time to act on dynamically unstable microtubules before the enzyme is released. Required for normal sperm flagellar function. Promotes directional cell locomotion and chemotaxis, through AP2A2-dependent acetylation of alpha-tubulin at clathrin-coated pits that are concentrated at the leading edge of migrating cells. May facilitate primary cilium assembly. The sequence is that of Alpha-tubulin N-acetyltransferase 1 from Sus scrofa (Pig).